Consider the following 410-residue polypeptide: 2-oxoisovalerate dehydrogenase subunit alpha (410 aa).

The protein belongs to the BCKDHA family. Heterodimer of an alpha and a beta chain. It depends on thiamine diphosphate as a cofactor.

The catalysed reaction is N(6)-[(R)-lipoyl]-L-lysyl-[protein] + 3-methyl-2-oxobutanoate + H(+) = N(6)-[(R)-S(8)-2-methylpropanoyldihydrolipoyl]-L-lysyl-[protein] + CO2. Its function is as follows. The branched-chain alpha-keto dehydrogenase complex catalyzes the overall conversion of alpha-keto acids to acyl-CoA and CO(2). It contains multiple copies of three enzymatic components: branched-chain alpha-keto acid decarboxylase (E1), lipoamide acyltransferase (E2) and lipoamide dehydrogenase (E3). The sequence is that of 2-oxoisovalerate dehydrogenase subunit alpha (bkdA1) from Pseudomonas aeruginosa (strain ATCC 15692 / DSM 22644 / CIP 104116 / JCM 14847 / LMG 12228 / 1C / PRS 101 / PAO1).